The chain runs to 625 residues: ATP-dependent rRNA helicase spb4 (625 aa).

The Q motif motif lies at 14–42; the sequence is WDALTPSLAEWILDAIKSMGFEKMTPVQA. Positions 45-246 constitute a Helicase ATP-binding domain; the sequence is IPLFMGNKDV…RVGLRNPVKI (202 aa). 58-65 contributes to the ATP binding site; it reads AVTGSGKT. The DEAD box signature appears at 194-197; it reads DEAD. The 159-residue stretch at 278-436 folds into the Helicase C-terminal domain; the sequence is ALLSLLSQLQ…TTDDAAKILI (159 aa). The tract at residues 550-597 is disordered; the sequence is KKQREAWSQKHEKQDLKELKREKKKRKREIERLDKMTDEEKRVEQEKE. Composition is skewed to basic and acidic residues over residues 553-570 and 577-597; these read REAW…ELKR and REIE…QEKE. The stretch at 557–614 forms a coiled coil; it reads SQKHEKQDLKELKREKKKRKREIERLDKMTDEEKRVEQEKERELQALIEQVKRRKIED.

Belongs to the DEAD box helicase family. DDX55/SPB4 subfamily. In terms of assembly, component of pre-60S ribosomal complexes.

Its subcellular location is the nucleus. It is found in the nucleolus. The catalysed reaction is ATP + H2O = ADP + phosphate + H(+). In terms of biological role, ATP-binding RNA helicase involved in the biogenesis of 60S ribosomal subunits. Binds 90S pre-ribosomal particles and dissociates from pre-60S ribosomal particles after processing of 27SB pre-rRNA. Required for the normal formation of 18S rRNA through the processing of pre-rRNAs at sites A0, A1 and A2, and the normal formation of 25S and 5.8S rRNAs through the processing of pre-rRNAs at sites C1 and C2. This chain is ATP-dependent rRNA helicase spb4, found in Sclerotinia sclerotiorum (strain ATCC 18683 / 1980 / Ss-1) (White mold).